Consider the following 161-residue polypeptide: 3-hydroxyacyl-[acyl-carrier-protein] dehydratase FabZ (161 aa).

His-66 is an active-site residue.

Belongs to the thioester dehydratase family. FabZ subfamily.

The protein resides in the cytoplasm. The catalysed reaction is a (3R)-hydroxyacyl-[ACP] = a (2E)-enoyl-[ACP] + H2O. Functionally, involved in unsaturated fatty acids biosynthesis. Catalyzes the dehydration of short chain beta-hydroxyacyl-ACPs and long chain saturated and unsaturated beta-hydroxyacyl-ACPs. This chain is 3-hydroxyacyl-[acyl-carrier-protein] dehydratase FabZ, found in Gluconacetobacter diazotrophicus (strain ATCC 49037 / DSM 5601 / CCUG 37298 / CIP 103539 / LMG 7603 / PAl5).